The chain runs to 86 residues: Small ribosomal subunit protein bS20 (86 aa).

This sequence belongs to the bacterial ribosomal protein bS20 family.

Functionally, binds directly to 16S ribosomal RNA. This is Small ribosomal subunit protein bS20 from Aliarcobacter butzleri (strain RM4018) (Arcobacter butzleri).